Reading from the N-terminus, the 659-residue chain is Cytochrome bo(3) ubiquinol oxidase subunit 1 (659 aa).

Topologically, residues 1 to 14 (MFGKLSLNSIPYHD) are extracellular. A helical transmembrane segment spans residues 15 to 35 (PIIMITCCVVILVFLVISIII). At 36–56 (TIAQKWQYLWNEWCCTVDHKK) the chain is on the cytoplasmic side. The helical transmembrane segment at 57-77 (IAKMYIFLAFIMLFRGFADAI) threads the bilayer. Residues arginine 71, aspartate 75, and histidine 101 each contribute to the a ubiquinone site. At 78-109 (MMRMQQFLVSSYHGNGTGFLPPHHYDQIFTAH) the chain is on the extracellular side. Residue histidine 109 participates in heme b binding. A helical transmembrane segment spans residues 110–130 (GVIMIFFVAMPLVIGLMNFVV). Topologically, residues 131–148 (PLQIGSRDVAFPFLNNLS) are cytoplasmic. A helical transmembrane segment spans residues 149–169 (LWLTIFSALLMNVSLGIGEFA). The Extracellular portion of the chain corresponds to 170-192 (QTGWLAYPPLSELQYSPGVGVDY). Tryptophan 173 contributes to the heme b binding site. A helical transmembrane segment spans residues 193-213 (WIWSLQISGIGTTLTAINFLV). Over 214-235 (TIIKMRSSGMNWFKIPVFTWTS) the chain is Cytoplasmic. The chain crosses the membrane as a helical span at residues 236–256 (FCTNILIIASFPVLTVSLLLL). At 257–280 (TLDRYLGFHFFTNDFGGNMMMYVN) the chain is on the extracellular side. Residues 281-301 (LIWIWGHPEVYILILPVFGIF) form a helical membrane-spanning segment. Histidine 287 provides a ligand contact to Cu(2+). Residues 287–291 (HPEVY) constitute a cross-link (1'-histidyl-3'-tyrosine (His-Tyr)). Tyrosine 291 lines the Fe(II)-heme o pocket. Residues 302–318 (SEVVATFSSKELFGYTS) lie on the Cytoplasmic side of the membrane. Residues 319-339 (LIWATIVITILSFIVWLHHFF) form a helical membrane-spanning segment. Cu(2+) contacts are provided by histidine 336 and histidine 337. Residues 340–350 (TMGASANVNAF) lie on the Extracellular side of the membrane. A helical transmembrane segment spans residues 351 to 371 (FGITTMIISIPTGVKIFNWLF). The Cytoplasmic segment spans residues 372 to 382 (TMYRGNVRINS). The helical transmembrane segment at 383 to 403 (IMLWTIGFLITFSIGGMAGVL) threads the bilayer. At 404 to 416 (LSLPVIDFSLHNS) the chain is on the extracellular side. Positions 414 and 422 each coordinate Fe(II)-heme o. A helical membrane pass occupies residues 417 to 437 (LFLVAHFHNVIIGGVVFGCFA). Residue histidine 424 participates in heme b binding. The Cytoplasmic portion of the chain corresponds to 438 to 459 (GITYWFPKLFGFMLSEKWGKRA). A helical membrane pass occupies residues 460–480 (FWCWFFGFFCAFMPLYALGLM). Residues 481 to 499 (GMTRRLSQNINPQFHSMLT) are Extracellular-facing. Residues arginine 484 and arginine 485 each coordinate heme b. Residues 500–520 (IAALGTILIFIGIVFQIIQIF) traverse the membrane as a helical segment. Topologically, residues 521–587 (VSIRDRNLNR…KLPILYTSFH (67 aa)) are cytoplasmic. A helical transmembrane segment spans residues 588–608 (MPKNTKFGFLIGFFAFLLGFS). A topological domain (extracellular) is located at residue alanine 609. The helical transmembrane segment at 610–630 (VWYIFWLFFISFFVIIYLLVI) threads the bilayer. Residues 631–659 (KSLDTNCDYIISIEEIKEIEKCINIKKMD) lie on the Cytoplasmic side of the membrane.

Belongs to the heme-copper respiratory oxidase family. As to quaternary structure, the cytochrome bo(3) ubiquinol oxidase complex is a heterooctamer of two A chains, two B chains, two C chains and two D chains. The cofactor is Cu(2+). Requires heme b as cofactor. Fe(II)-heme o serves as cofactor.

It is found in the cell membrane. It carries out the reaction 2 a ubiquinol + O2 + n H(+)(in) = 2 a ubiquinone + 2 H2O + n H(+)(out). Its function is as follows. Cytochrome bo(3) ubiquinol oxidase is the terminal enzyme in the aerobic respiratory chain. Catalyzes the four-electron reduction of O2 to water, using a ubiquinol as a membrane soluble electron donor for molecular oxygen reduction. Has proton pump activity across the membrane in addition to electron transfer, pumping 2 protons/electron and generating a proton motive force. All the redox centers of this enzyme complex are located within the largest subunit, subunit I. Protons are probably pumped via D- and K- channels found in this subunit. This chain is Cytochrome bo(3) ubiquinol oxidase subunit 1 (cyoB), found in Buchnera aphidicola subsp. Baizongia pistaciae (strain Bp).